Consider the following 365-residue polypeptide: Class I histocompatibility antigen, Gogo-A*0501 alpha chain (365 aa).

Positions 1-24 are cleaved as a signal peptide; it reads MAVVAPRTLLLLLSGALALTQTWA. Residues 25-114 are alpha-1; it reads GSHSMRYFST…ALRYYNQSED (90 aa). Residues 25–308 lie on the Extracellular side of the membrane; that stretch reads GSHSMRYFST…EPSSQPTIPI (284 aa). The N-linked (GlcNAc...) asparagine glycan is linked to asparagine 110. Positions 115–206 are alpha-2; that stretch reads GSHTIQRMYG…ENGKETLQRT (92 aa). 2 disulfide bridges follow: cysteine 125-cysteine 188 and cysteine 227-cysteine 283. The alpha-3 stretch occupies residues 207-298; sequence DAPKTHTTHQ…GLPKPLTLRW (92 aa). Residues 209 to 295 enclose the Ig-like C1-type domain; the sequence is PKTHTTHQAV…QHEGLPKPLT (87 aa). Residues 299-308 form a connecting peptide region; sequence EPSSQPTIPI. The chain crosses the membrane as a helical span at residues 309–332; that stretch reads VGIIAGLVLFGAVIAGAVVAAVRW. The Cytoplasmic segment spans residues 333-365; the sequence is RRKSSDRKGGSYSQAASSDSAQGSDVSLTACKV. The interval 338 to 365 is disordered; it reads DRKGGSYSQAASSDSAQGSDVSLTACKV. Over residues 342–359 the composition is skewed to low complexity; it reads GSYSQAASSDSAQGSDVS. Serine 343 carries the post-translational modification Phosphoserine. Phosphotyrosine is present on tyrosine 344. 5 positions are modified to phosphoserine: serine 345, serine 349, serine 352, serine 356, and serine 359.

It belongs to the MHC class I family. In terms of assembly, heterodimer of an alpha chain and a beta chain (beta-2-microglobulin).

It localises to the membrane. Its function is as follows. Involved in the presentation of foreign antigens to the immune system. This is Class I histocompatibility antigen, Gogo-A*0501 alpha chain from Gorilla gorilla gorilla (Western lowland gorilla).